A 180-amino-acid polypeptide reads, in one-letter code: Ribulose bisphosphate carboxylase small subunit, chloroplastic 2 (180 aa).

Residues 1 to 56 (MASMISSSAVTTVSRASRGQSAAVAPFGGLKSMTGFPVKKVNTDITSITSNGGRVK) constitute a chloroplast transit peptide.

The protein belongs to the RuBisCO small chain family. As to quaternary structure, heterohexadecamer of 8 large and 8 small subunits.

The protein resides in the plastid. Its subcellular location is the chloroplast. Functionally, ruBisCO catalyzes two reactions: the carboxylation of D-ribulose 1,5-bisphosphate, the primary event in carbon dioxide fixation, as well as the oxidative fragmentation of the pentose substrate. Both reactions occur simultaneously and in competition at the same active site. Although the small subunit is not catalytic it is essential for maximal activity. This is Ribulose bisphosphate carboxylase small subunit, chloroplastic 2 from Pisum sativum (Garden pea).